Reading from the N-terminus, the 172-residue chain is Adenine phosphoribosyltransferase (172 aa).

The protein belongs to the purine/pyrimidine phosphoribosyltransferase family. In terms of assembly, homodimer.

It is found in the cytoplasm. The catalysed reaction is AMP + diphosphate = 5-phospho-alpha-D-ribose 1-diphosphate + adenine. It participates in purine metabolism; AMP biosynthesis via salvage pathway; AMP from adenine: step 1/1. Catalyzes a salvage reaction resulting in the formation of AMP, that is energically less costly than de novo synthesis. The polypeptide is Adenine phosphoribosyltransferase (Streptococcus equi subsp. zooepidemicus (strain H70)).